The primary structure comprises 910 residues: Leucine--tRNA ligase (910 aa).

A 'HIGH' region motif is present at residues 42 to 52 (PYPSGKLHMGH). A 'KMSKS' region motif is present at residues 658-662 (TMSKS). Residue K661 coordinates ATP.

It belongs to the class-I aminoacyl-tRNA synthetase family.

The protein localises to the cytoplasm. It carries out the reaction tRNA(Leu) + L-leucine + ATP = L-leucyl-tRNA(Leu) + AMP + diphosphate. This chain is Leucine--tRNA ligase, found in Acidovorax sp. (strain JS42).